The following is a 177-amino-acid chain: Ribonuclease M5 (177 aa).

A Toprim domain is found at Lys5–Ala99. Mg(2+) contacts are provided by Glu11, Asp59, and Asp61.

The protein belongs to the ribonuclease M5 family. Requires Mg(2+) as cofactor.

It is found in the cytoplasm. The catalysed reaction is Endonucleolytic cleavage of RNA, removing 21 and 42 nucleotides, respectively, from the 5'- and 3'-termini of a 5S-rRNA precursor.. Functionally, required for correct processing of both the 5' and 3' ends of 5S rRNA precursor. Cleaves both sides of a double-stranded region yielding mature 5S rRNA in one step. This Mycoplasma mycoides subsp. mycoides SC (strain CCUG 32753 / NCTC 10114 / PG1) protein is Ribonuclease M5.